The primary structure comprises 409 residues: Alpha-1-antitrypsin (409 aa).

The first 15 residues, 1–15 (LLLAGLCCLLPGSLA), serve as a signal peptide directing secretion. The segment at 18–39 (PQGDAAQKTDTPPHDQNHPTLN) is disordered. Asn-61, Asn-98, Asn-136, and Asn-262 each carry an N-linked (GlcNAc...) asparagine glycan. Residues 364 to 383 (GAMFLEAIPMSIPPEVKFNK) form an RCL region. A Phosphoserine modification is found at Ser-374.

The protein belongs to the serpin family. As to quaternary structure, interacts with CELA2A. Interacts with ERGIC3 and LMAN1/ERGIC53. Interacts with PRSS1/Trypsin. Plasma.

The protein resides in the secreted. Inhibitor of serine proteases. Its primary target is elastase, but it also has a moderate affinity for plasmin and thrombin. Inhibits trypsin, chymotrypsin and plasminogen activator. This Papio anubis (Olive baboon) protein is Alpha-1-antitrypsin (SERPINA1).